The sequence spans 156 residues: MNINLTLIGQAIAFAFFVAFCMKFVWPPLINAISERQRKIADGLNAAEKAKADLADAQAQVKQELDAAKAQAAQLIEQANRRAAQLIEEARTQAAAEGERIRQQAKEAVDQEINSAREELRQQVAALVVTGAEKILNQQVDAEAHNAMLSQLAAKL.

Residues 5 to 25 form a helical membrane-spanning segment; it reads LTLIGQAIAFAFFVAFCMKFV.

The protein belongs to the ATPase B chain family. In terms of assembly, F-type ATPases have 2 components, F(1) - the catalytic core - and F(0) - the membrane proton channel. F(1) has five subunits: alpha(3), beta(3), gamma(1), delta(1), epsilon(1). F(0) has three main subunits: a(1), b(2) and c(10-14). The alpha and beta chains form an alternating ring which encloses part of the gamma chain. F(1) is attached to F(0) by a central stalk formed by the gamma and epsilon chains, while a peripheral stalk is formed by the delta and b chains.

The protein resides in the cell inner membrane. Its function is as follows. F(1)F(0) ATP synthase produces ATP from ADP in the presence of a proton or sodium gradient. F-type ATPases consist of two structural domains, F(1) containing the extramembraneous catalytic core and F(0) containing the membrane proton channel, linked together by a central stalk and a peripheral stalk. During catalysis, ATP synthesis in the catalytic domain of F(1) is coupled via a rotary mechanism of the central stalk subunits to proton translocation. Functionally, component of the F(0) channel, it forms part of the peripheral stalk, linking F(1) to F(0). The chain is ATP synthase subunit b from Acinetobacter baumannii (strain SDF).